Reading from the N-terminus, the 104-residue chain is MSEEKPKEGVKTENDHINLKVAGQDGSVVQFKIKRHTPLSKLMKAYCERQGLSMRQIRFRFDGQPINETDTPAQLEMEDEDTIDVFQQQTGGSRVASCLLGSGL.

Glycyl lysine isopeptide (Lys-Gly) (interchain with G-Cter in SUMO2) cross-links involve residues K5 and K7. K11 is covalently cross-linked (Glycyl lysine isopeptide (Lys-Gly) (interchain with G-Cter in SUMO); alternate). Residue K11 forms a Glycyl lysine isopeptide (Lys-Gly) (interchain with G-Cter in SUMO2); alternate linkage. One can recognise a Ubiquitin-like domain in the interval 15-92; the sequence is DHINLKVAGQ…IDVFQQQTGG (78 aa). G92 participates in a covalent cross-link: Glycyl lysine isopeptide (Gly-Lys) (interchain with K-? in acceptor proteins). A propeptide spanning residues 93–104 is cleaved from the precursor; that stretch reads SRVASCLLGSGL.

The protein belongs to the ubiquitin family. SUMO subfamily. As to quaternary structure, interacts with SAE2 and UBE2I. Covalently attached to a number of proteins. Interacts with USP25 (via ts SIM domain); the interaction sumoylates USP25 and inhibits its ubiquitin hydrolyzing activity. Interacts with BMAL1. Polymeric chains can be formed through Lys-11 cross-linking. Post-translationally, cleavage of precursor form by SENP1, SENP2 or SENP5 is necessary for function.

It localises to the cytoplasm. The protein resides in the nucleus. It is found in the PML body. Functionally, ubiquitin-like protein which can be covalently attached to target lysines either as a monomer or as a lysine-linked polymer. Does not seem to be involved in protein degradation and may function as an antagonist of ubiquitin in the degradation process. Plays a role in a number of cellular processes such as nuclear transport, DNA replication and repair, mitosis and signal transduction. Covalent attachment to its substrates requires prior activation by the E1 complex SAE1-SAE2 and linkage to the E2 enzyme UBE2I, and can be promoted by an E3 ligase such as PIAS1-4, RANBP2 or CBX4. Plays a role in the regulation of sumoylation status of SETX. The protein is Small ubiquitin-related modifier 3 (SUMO3) of Bos taurus (Bovine).